A 368-amino-acid polypeptide reads, in one-letter code: MEPVHVSTSSKVLFKKVRKIVPPLLEKFHKGQHGRVAVIGGSLDYTGAPYFSSMASARLGMSSNHVICEKSAATVIKSYSPNLMVHPLLPSTDSVSNPGSIDARALASPIVSMLSRLHALVIGPGLGRDGVTLKVVTEVMKEARSRSIPFVLDADGLLLVTEDPNLVKGYKDCILTPNVNEFSRLAKALGIEVPSQAQIAAQTDESDKTSKESQACEQLSQALGGVTIIQKGPHDVISNGVTTLISDLKGGLKRSGGQGDTLTGSLGTLLAWRAAYHNKSWDSGEQENPKEAQSKQDVLAELESENKRMSPATTLLLVAWAGSGITRECSRRAFNAKGRSLQASDLTDEVHESFLELIGEPEASRTHL.

A YjeF C-terminal domain is found at 13–357 (LFKKVRKIVP…DEVHESFLEL (345 aa)). (6S)-NADPHX contacts are provided by residues glycine 125 and 178-184 (NVNEFSR). ATP contacts are provided by residues 231–235 (KGPHD) and 250–259 (GGLKRSGGQG). Residue aspartate 260 participates in (6S)-NADPHX binding.

The protein belongs to the NnrD/CARKD family. It depends on Mg(2+) as a cofactor.

It is found in the cytoplasm. It catalyses the reaction (6S)-NADHX + ATP = ADP + phosphate + NADH + H(+). The enzyme catalyses (6S)-NADPHX + ATP = ADP + phosphate + NADPH + H(+). In terms of biological role, catalyzes the dehydration of the S-form of NAD(P)HX at the expense of ATP, which is converted to ADP. Together with NAD(P)HX epimerase, which catalyzes the epimerization of the S- and R-forms, the enzyme allows the repair of both epimers of NAD(P)HX, a damaged form of NAD(P)H that is a result of enzymatic or heat-dependent hydration. The protein is ATP-dependent (S)-NAD(P)H-hydrate dehydratase of Aspergillus fumigatus (strain ATCC MYA-4609 / CBS 101355 / FGSC A1100 / Af293) (Neosartorya fumigata).